The chain runs to 912 residues: Protein translocase subunit SecA (912 aa).

ATP is bound by residues glutamine 87, 105–109, and aspartate 508; that span reads GEGKT. Residues 864–912 form a disordered region; that stretch reads AEEEVEQMQGGNAPVPVSQVTRDEPKVGRNDPCPCGSGKKYKHCHGQLS. Residues cysteine 896, cysteine 898, cysteine 907, and histidine 908 each contribute to the Zn(2+) site. Residues 902–912 are compositionally biased toward basic residues; it reads KKYKHCHGQLS.

Belongs to the SecA family. Monomer and homodimer. Part of the essential Sec protein translocation apparatus which comprises SecA, SecYEG and auxiliary proteins SecDF-YajC and YidC. Zn(2+) is required as a cofactor.

Its subcellular location is the cell inner membrane. The protein localises to the cytoplasm. It carries out the reaction ATP + H2O + cellular proteinSide 1 = ADP + phosphate + cellular proteinSide 2.. Its function is as follows. Part of the Sec protein translocase complex. Interacts with the SecYEG preprotein conducting channel. Has a central role in coupling the hydrolysis of ATP to the transfer of proteins into and across the cell membrane, serving both as a receptor for the preprotein-SecB complex and as an ATP-driven molecular motor driving the stepwise translocation of polypeptide chains across the membrane. The chain is Protein translocase subunit SecA from Xanthomonas euvesicatoria pv. vesicatoria (strain 85-10) (Xanthomonas campestris pv. vesicatoria).